Here is a 226-residue protein sequence, read N- to C-terminus: Putative integrase V10 (226 aa).

Residues R97, H174, and R177 contribute to the active site. Y210 (O-(3'-phospho-DNA)-tyrosine intermediate) is an active-site residue.

Belongs to the 'phage' integrase family.

Functionally, may catalyze site-specific integration of viral genome into host or helper virus DNA. This chain is Putative integrase V10, found in Acanthamoeba polyphaga (Amoeba).